The sequence spans 710 residues: E3 ubiquitin-protein ligase TRIM9 (710 aa).

The RING-type zinc-finger motif lies at 10–50; it reads CPVCGSFYREPIILPCSHNLCQACARNILVQTPESESPQSR. Threonine 41 carries the phosphothreonine modification. Serine 44, serine 46, serine 49, and serine 53 each carry phosphoserine. 2 consecutive B box-type zinc fingers follow at residues 163–212 and 224–266; these read AAAL…LVPP and RKVS…VKAL. The Zn(2+) site is built by cysteine 168, cysteine 171, cysteine 193, histidine 198, cysteine 229, histidine 232, cysteine 252, and histidine 258. Positions 273-340 form a coiled coil; that stretch reads HKSQLSQALN…KAQLLARVNK (68 aa). A COS domain is found at 374-432; sequence IKENDPSGFLQISDALIRRVHLTEDQWGKGTLTPRMTTDFDLSLDNSPLLQSIHQLDFV. Residues 440–535 enclose the Fibronectin type-III domain; sequence VPATPILQLE…KTLVLQTSEV (96 aa). Positions 533-702 constitute a B30.2/SPRY domain; that stretch reads SEVAWFAFDP…LHTGLPVPDF (170 aa).

In terms of assembly, interacts with SNAP25. Auto-ubiquitinated. As to expression, brain (at protein level). Expressed in fetal and adult brain.

Its subcellular location is the cytoplasmic vesicle. It is found in the secretory vesicle. The protein resides in the synaptic vesicle. The protein localises to the synapse. It localises to the cytoplasm. Its subcellular location is the cytoskeleton. It is found in the cell projection. The protein resides in the dendrite. The catalysed reaction is S-ubiquitinyl-[E2 ubiquitin-conjugating enzyme]-L-cysteine + [acceptor protein]-L-lysine = [E2 ubiquitin-conjugating enzyme]-L-cysteine + N(6)-ubiquitinyl-[acceptor protein]-L-lysine.. It functions in the pathway protein modification; protein ubiquitination. E3 ubiquitin-protein ligase which ubiquitinates itself in cooperation with an E2 enzyme UBE2D2/UBC4 and serves as a targeting signal for proteasomal degradation. May play a role in regulation of neuronal functions. May act as a regulator of synaptic vesicle exocytosis by controlling the availability of SNAP25 for the SNARE complex formation. This is E3 ubiquitin-protein ligase TRIM9 (Trim9) from Rattus norvegicus (Rat).